Consider the following 262-residue polypeptide: [LysW]-aminoadipate/[LysW]-glutamate kinase (262 aa).

Substrate is bound by residues 35–36 (GG), Arg62, and Asn167.

This sequence belongs to the acetylglutamate kinase family. LysZ subfamily.

Its subcellular location is the cytoplasm. It catalyses the reaction [amino-group carrier protein]-C-terminal-N-(1,4-dicarboxybutan-1-yl)-L-glutamine + ATP = [amino-group carrier protein]-C-terminal-N-(1-carboxy-5-phosphooxy-5-oxopentan-1-yl)-L-glutamine + ADP. It carries out the reaction [amino-group carrier protein]-C-terminal-gamma-(L-glutamyl)-L-glutamate + ATP = [amino-group carrier protein]-C-terminal-gamma-(5-phospho-L-glutamyl)-L-glutamate + ADP. The protein operates within amino-acid biosynthesis; L-lysine biosynthesis via AAA pathway; L-lysine from L-alpha-aminoadipate (Thermus route): step 2/5. It participates in amino-acid biosynthesis; L-arginine biosynthesis. In terms of biological role, involved in both the arginine and lysine biosynthetic pathways. Phosphorylates the LysW-bound precursors glutamate (for arginine biosynthesis), respectively alpha-aminoadipate (for lysine biosynthesis). This Metallosphaera sedula (strain ATCC 51363 / DSM 5348 / JCM 9185 / NBRC 15509 / TH2) protein is [LysW]-aminoadipate/[LysW]-glutamate kinase.